A 513-amino-acid polypeptide reads, in one-letter code: ATP synthase subunit alpha (513 aa).

ATP is bound at residue 169 to 176 (GDRQTGKT).

Belongs to the ATPase alpha/beta chains family. F-type ATPases have 2 components, CF(1) - the catalytic core - and CF(0) - the membrane proton channel. CF(1) has five subunits: alpha(3), beta(3), gamma(1), delta(1), epsilon(1). CF(0) has three main subunits: a(1), b(2) and c(9-12). The alpha and beta chains form an alternating ring which encloses part of the gamma chain. CF(1) is attached to CF(0) by a central stalk formed by the gamma and epsilon chains, while a peripheral stalk is formed by the delta and b chains.

The protein resides in the cell inner membrane. It carries out the reaction ATP + H2O + 4 H(+)(in) = ADP + phosphate + 5 H(+)(out). Functionally, produces ATP from ADP in the presence of a proton gradient across the membrane. The alpha chain is a regulatory subunit. The protein is ATP synthase subunit alpha of Pectobacterium carotovorum subsp. carotovorum (strain PC1).